A 285-amino-acid polypeptide reads, in one-letter code: MLSSAKHQRNHRLSATNKNQTLTKVSSISSSSPSSSSSSSSTSSSSPLPSQDSQAQKRSLVTMEEVWNDINLASIHHLNRHSPHPQHNHEPRFRGQNHHNQNPNSIFQDFLKGSLNQEPAPTSQTTGSAPNGDSTTVTVLYSSPFPPPATVLSLNSGAGFEFLDNQDPLVTSNSNLHTHHHLSNAHAFNTSFEALVPSSSFGKKRGQDSNEGSGNRRHKRMIKNRESAARSRARKQAYTNELELEVAHLQAENARLKRQQDQLKMAAAIQQPKKNTLQRSSTAPF.

Residues 1-12 (MLSSAKHQRNHR) show a composition bias toward basic residues. Disordered stretches follow at residues 1–59 (MLSS…QKRS), 79–107 (NRHSPHPQHNHEPRFRGQNHHNQNPNSIF), 115–134 (LNQEPAPTSQTTGSAPNGDS), 198–236 (SSSFGKKRGQDSNEGSGNRRHKRMIKNRESAARSRARKQ), and 257–285 (KRQQDQLKMAAAIQQPKKNTLQRSSTAPF). Over residues 13 to 25 (LSATNKNQTLTKV) the composition is skewed to polar residues. Residues 26 to 50 (SSISSSSPSSSSSSSSTSSSSPLPS) are compositionally biased toward low complexity. The segment covering 98–107 (HHNQNPNSIF) has biased composition (polar residues). The 64-residue stretch at 214 to 277 (GNRRHKRMIK…AIQQPKKNTL (64 aa)) folds into the bZIP domain. The interval 216-235 (RRHKRMIKNRESAARSRARK) is basic motif. Positions 242 to 263 (LELEVAHLQAENARLKRQQDQL) are leucine-zipper. Polar residues predominate over residues 272-285 (PKKNTLQRSSTAPF). Thr282 is modified (phosphothreonine).

The protein belongs to the bZIP family. In terms of assembly, self-interacts. Interacts with FT and FDP/BZIP27. Interacts with GRF3 and GRF4, and in a calcium-independent manner, with CPK6 and CPK33. Post-translationally, phosphorylated at Thr-282 in a calcium-dependent manner by CPK6 and CPK33. As to expression, highly expressed in shoot apex.

The protein localises to the nucleus. Its function is as follows. Transcription factor required for the transition to flowering promoted by FT. The sequence is that of Protein FD from Arabidopsis thaliana (Mouse-ear cress).